A 264-amino-acid polypeptide reads, in one-letter code: Na(+)-translocating NADH-quinone reductase subunit E (264 aa).

Transmembrane regions (helical) follow at residues 11 to 31 (VFGI…NFLG), 50 to 70 (MSVA…HTFI), 90 to 110 (FLEL…LELL), 123 to 143 (GIFL…LFGI), 149 to 169 (FIPM…AIVL), and 189 to 209 (MGIS…LTGI).

It belongs to the NqrDE/RnfAE family. As to quaternary structure, composed of six subunits; NqrA, NqrB, NqrC, NqrD, NqrE and NqrF.

It is found in the cell inner membrane. It carries out the reaction a ubiquinone + n Na(+)(in) + NADH + H(+) = a ubiquinol + n Na(+)(out) + NAD(+). NQR complex catalyzes the reduction of ubiquinone-1 to ubiquinol by two successive reactions, coupled with the transport of Na(+) ions from the cytoplasm to the periplasm. NqrA to NqrE are probably involved in the second step, the conversion of ubisemiquinone to ubiquinol. This chain is Na(+)-translocating NADH-quinone reductase subunit E, found in Chlamydia caviae (strain ATCC VR-813 / DSM 19441 / 03DC25 / GPIC) (Chlamydophila caviae).